Reading from the N-terminus, the 166-residue chain is Nascent polypeptide-associated complex subunit beta (166 aa).

Disordered regions lie at residues 1 to 40 and 129 to 166; these read MVLN…EDPK and HAAS…DKLD. The 66-residue stretch at 35 to 100 folds into the NAC-A/B domain; sequence GGEDPKLQAA…GVDKELTELV (66 aa). Over residues 141–153 the composition is skewed to acidic residues; that stretch reads DDDDVPDVVENFD. The span at 154–166 shows a compositional bias: basic and acidic residues; sequence EADKKETEVDKLD.

The protein belongs to the NAC-beta family. Part of the nascent polypeptide-associated complex (NAC), consisting of EGD2 and EGD1. NAC associates with ribosomes via EGD1.

The protein localises to the cytoplasm. The protein resides in the nucleus. Component of the nascent polypeptide-associated complex (NAC), a dynamic component of the ribosomal exit tunnel, protecting the emerging polypeptides from interaction with other cytoplasmic proteins to ensure appropriate nascent protein targeting. The NAC complex also promotes mitochondrial protein import by enhancing productive ribosome interactions with the outer mitochondrial membrane and blocks the inappropriate interaction of ribosomes translating non-secretory nascent polypeptides with translocation sites in the membrane of the endoplasmic reticulum. EGD1 may act as a transcription factor that exert a negative effect on the expression of several genes that are transcribed by RNA polymerase II. This chain is Nascent polypeptide-associated complex subunit beta (EGD1), found in Mycosarcoma maydis (Corn smut fungus).